Reading from the N-terminus, the 256-residue chain is Phosphonates import ATP-binding protein PhnC (256 aa).

The ABC transporter domain maps to 5–253; it reads LRITGLVKEY…MLKTIYGGES (249 aa). Residue 38–45 participates in ATP binding; that stretch reads GPSGTGKS.

It belongs to the ABC transporter superfamily. Phosphonates importer (TC 3.A.1.9.1) family. In terms of assembly, the complex is composed of two ATP-binding proteins (PhnC), two transmembrane proteins (PhnE) and a solute-binding protein (PhnD).

The protein resides in the cell inner membrane. It catalyses the reaction phosphonate(out) + ATP + H2O = phosphonate(in) + ADP + phosphate + H(+). In terms of biological role, part of the ABC transporter complex PhnCDE involved in phosphonates import. Responsible for energy coupling to the transport system. This chain is Phosphonates import ATP-binding protein PhnC, found in Bordetella parapertussis (strain 12822 / ATCC BAA-587 / NCTC 13253).